Consider the following 204-residue polypeptide: Thymidylate kinase (204 aa).

13–20 (GIDGSGKS) serves as a coordination point for ATP.

The protein belongs to the thymidylate kinase family.

It carries out the reaction dTMP + ATP = dTDP + ADP. In terms of biological role, phosphorylation of dTMP to form dTDP in both de novo and salvage pathways of dTTP synthesis. This chain is Thymidylate kinase, found in Leptospira interrogans serogroup Icterohaemorrhagiae serovar copenhageni (strain Fiocruz L1-130).